We begin with the raw amino-acid sequence, 396 residues long: Proteinase-activated receptor 4 (396 aa).

The N-terminal stretch at 1-16 (MCWPLLYPLVLGLSIS) is a signal peptide. The propeptide at 17-59 (LAEGIQTPSIYDDVESTRGSHEGPLGPTVELKEPKSSDKPNPR) is removed for receptor activation. The interval 28–62 (DDVESTRGSHEGPLGPTVELKEPKSSDKPNPRGYP) is disordered. Residues 46–57 (ELKEPKSSDKPN) show a composition bias toward basic and acidic residues. At 60 to 94 (GYPGKFCANDSDTLELPASSQALLLGWVPTRLVPA) the chain is on the extracellular side. Residue asparagine 68 is glycosylated (N-linked (GlcNAc...) asparagine). The chain crosses the membrane as a helical span at residues 95–115 (LYGLVVAVGLPANGLALWVLA). The Cytoplasmic segment spans residues 116–120 (TRVPR). The chain crosses the membrane as a helical span at residues 121-141 (LPSTILLMNLAVADLLLALVL). The Extracellular portion of the chain corresponds to 142–162 (PPRLAYHLRGQRWPFGEAACR). Cysteine 161 and cysteine 240 are disulfide-bonded. The helical transmembrane segment at 163-183 (VATAALYGHMYGSVLLLAAVS) threads the bilayer. At 184 to 203 (LDRYLALVHPLRARALRGQR) the chain is on the cytoplasmic side. The chain crosses the membrane as a helical span at residues 204–224 (LTTGLCLVAWLSAATLALPLT). Topologically, residues 225–255 (LHRQTFRLAGSDRMLCHDALPLTEQTSHWRP) are extracellular. A helical transmembrane segment spans residues 256–276 (AFICLAVLGCFVPLLAMGLCY). Over 277 to 295 (GATLRALAANGQRYSHALR) the chain is Cytoplasmic. The helical transmembrane segment at 296 to 316 (LTALVLFSAVASFTPSNVLLV) threads the bilayer. The Extracellular portion of the chain corresponds to 317-331 (LHYSNPSPEAWGNLY). Residues 332–355 (GAYVPSLALSTLNSCVDPFIYYYV) traverse the membrane as a helical segment. The Cytoplasmic segment spans residues 356–396 (SHEFREKVRAMLCRQPEASSSSQASREAGSRGTAICSSTLL).

It belongs to the G-protein coupled receptor 1 family. Post-translationally, a proteolytic cleavage generates a new N-terminus that functions as a tethered ligand. Highly expressed in the spleen. Slight expression in the heart, lung, skeletal muscle and kidney. No detectable expression in brain, liver or testis. Also detected in platelets.

It is found in the cell membrane. In terms of biological role, receptor for activated thrombin or trypsin coupled to G proteins that stimulate phosphoinositide hydrolysis. May play a role in platelets activation. In Mus musculus (Mouse), this protein is Proteinase-activated receptor 4 (F2rl3).